A 302-amino-acid chain; its full sequence is Aspartate carbamoyltransferase catalytic subunit (302 aa).

Carbamoyl phosphate contacts are provided by R55 and T56. An L-aspartate-binding site is contributed by K83. R105, H133, and Q136 together coordinate carbamoyl phosphate. R166 and R222 together coordinate L-aspartate. The carbamoyl phosphate site is built by G262 and P263.

This sequence belongs to the aspartate/ornithine carbamoyltransferase superfamily. ATCase family. In terms of assembly, heterododecamer (2C3:3R2) of six catalytic PyrB chains organized as two trimers (C3), and six regulatory PyrI chains organized as three dimers (R2).

The enzyme catalyses carbamoyl phosphate + L-aspartate = N-carbamoyl-L-aspartate + phosphate + H(+). It functions in the pathway pyrimidine metabolism; UMP biosynthesis via de novo pathway; (S)-dihydroorotate from bicarbonate: step 2/3. Its function is as follows. Catalyzes the condensation of carbamoyl phosphate and aspartate to form carbamoyl aspartate and inorganic phosphate, the committed step in the de novo pyrimidine nucleotide biosynthesis pathway. The protein is Aspartate carbamoyltransferase catalytic subunit of Solibacter usitatus (strain Ellin6076).